Here is a 471-residue protein sequence, read N- to C-terminus: FAD-dependent monooxygenase andE (471 aa).

FAD-binding residues include Glu35, Gly49, and Arg108. Residue Tyr216 is part of the active site. 2 residues coordinate FAD: Asp308 and Ala321. Helical transmembrane passes span 403 to 423 (LANI…LPFP) and 443 to 463 (TPFA…LLGL).

This sequence belongs to the paxM FAD-dependent monooxygenase family. It depends on FAD as a cofactor.

It is found in the membrane. It functions in the pathway secondary metabolite biosynthesis; terpenoid biosynthesis. Its function is as follows. FAD-dependent monooxygenase; part of the gene cluster that mediates the biosynthesis of anditomin, a fungal meroterpenoid. The first step of the pathway is the synthesis of 3,5-dimethylorsellinic acid (DMOA) by the polyketide synthase andM. DMOA is then converted to the phthalide compound 5,7-dihydroxy-4,6-dimethylphthalide (DHDMP) by the cytochrome P450 monooxygenase andK, which is further prenylated by the prenyltransferase andD to yield farnesyl-DHDMP. Further epoxidation by the FAD-dependent monooxygenase andE leads to epoxyfarnesyl-DHDMP. The next step involves the terpene cyclase andB that converts epoxyfarnesyl-DHDMP into preandiloid A through opening of the epoxide ring followed by the cyclization of the farnesyl moiety. Preandiloid A is in turn oxidized at the C-3 hydroxyl group to yield preandiloid B by the dehydrogenase andC. The dioxygenase andA is solely responsible for the dehydrogenation of preandiloid B leading to the enone preandiloid C, as well as for the intriguing structural rearrangement to generate the bicyclo[2.2.2]octane core, transforming preandiloid C into andiconin. FAD-binding monooxygenase andJ then produces andilesin D which is reduced by dehydrogenase andI to yield andilesin A. Action of acetyltransferase andG followed by a spontaneous acetate elimination leads then to andilesin B, which is in turn substrate of the short chain dehydrogenase andH to yield andilesin C. Finally, the dioxygenase andF catalyzes the transformation of andilesin C to anditomin. This Emericella variicolor (Aspergillus stellatus) protein is FAD-dependent monooxygenase andE.